Reading from the N-terminus, the 438-residue chain is Phosphoribosylamine--glycine ligase (438 aa).

Residues 108-316 (REFMERNDIP…LVEIAEGIVK (209 aa)) form the ATP-grasp domain. 135-194 (IDEYGKPVVVKPLGLTGGKGVKVVGYQLKDNEEAKEYAEYLIKKDGKVLIEERTDGVEFT) provides a ligand contact to ATP. Mg(2+) is bound by residues Gln-274, Glu-286, and Asn-288. Mn(2+) contacts are provided by Gln-274, Glu-286, and Asn-288.

Belongs to the GARS family. Requires Mg(2+) as cofactor. It depends on Mn(2+) as a cofactor.

The catalysed reaction is 5-phospho-beta-D-ribosylamine + glycine + ATP = N(1)-(5-phospho-beta-D-ribosyl)glycinamide + ADP + phosphate + H(+). The protein operates within purine metabolism; IMP biosynthesis via de novo pathway; N(1)-(5-phospho-D-ribosyl)glycinamide from 5-phospho-alpha-D-ribose 1-diphosphate: step 2/2. In Pyrococcus abyssi (strain GE5 / Orsay), this protein is Phosphoribosylamine--glycine ligase.